The sequence spans 338 residues: Solute carrier family 35 member B1 homolog (338 aa).

9 helical membrane passes run 9 to 29 (FVIY…VQEK), 53 to 73 (LALV…LLTI), 84 to 104 (GSYV…NMAM), 111 to 131 (TAVV…VLIG), 135 to 155 (YSWT…LFMY), 168 to 188 (TLLG…TGAV), 213 to 233 (LMLG…YFTI), 244 to 264 (LIAV…ASFG), and 284 to 304 (VLLF…LVFA). Residues 334–338 (KKLNS) carry the Di-lysine motif motif.

This sequence belongs to the nucleotide-sugar transporter family. SLC35B subfamily.

The protein resides in the endoplasmic reticulum membrane. Functionally, probable sugar transporter. This chain is Solute carrier family 35 member B1 homolog (meigo), found in Drosophila melanogaster (Fruit fly).